Here is a 635-residue protein sequence, read N- to C-terminus: Threonine--tRNA ligase (635 aa).

Positions 1-58 (MIQVTCDQKNYEVLEGTTAAELAKQLKNSHQFIGVLINERPRDLSTHLNEGDTLVFLT) constitute a TGS domain. Residues 237-528 (DHRVLGAKLD…LIENFKGRFP (292 aa)) are catalytic. Residues cysteine 328, histidine 379, and histidine 505 each contribute to the Zn(2+) site.

This sequence belongs to the class-II aminoacyl-tRNA synthetase family. Homodimer. The cofactor is Zn(2+).

It localises to the cytoplasm. It catalyses the reaction tRNA(Thr) + L-threonine + ATP = L-threonyl-tRNA(Thr) + AMP + diphosphate + H(+). Functionally, catalyzes the attachment of threonine to tRNA(Thr) in a two-step reaction: L-threonine is first activated by ATP to form Thr-AMP and then transferred to the acceptor end of tRNA(Thr). Also edits incorrectly charged L-seryl-tRNA(Thr). This Chlamydia pneumoniae (Chlamydophila pneumoniae) protein is Threonine--tRNA ligase.